A 116-amino-acid polypeptide reads, in one-letter code: Large ribosomal subunit protein eL22A (116 aa).

This sequence belongs to the eukaryotic ribosomal protein eL22 family.

The chain is Large ribosomal subunit protein eL22A (rpl22) from Dictyostelium discoideum (Social amoeba).